The primary structure comprises 212 residues: 3-isopropylmalate dehydratase small subunit 1 (212 aa).

This sequence belongs to the LeuD family. LeuD type 1 subfamily. Heterodimer of LeuC and LeuD.

It catalyses the reaction (2R,3S)-3-isopropylmalate = (2S)-2-isopropylmalate. Its pathway is amino-acid biosynthesis; L-leucine biosynthesis; L-leucine from 3-methyl-2-oxobutanoate: step 2/4. Catalyzes the isomerization between 2-isopropylmalate and 3-isopropylmalate, via the formation of 2-isopropylmaleate. This chain is 3-isopropylmalate dehydratase small subunit 1, found in Chromobacterium violaceum (strain ATCC 12472 / DSM 30191 / JCM 1249 / CCUG 213 / NBRC 12614 / NCIMB 9131 / NCTC 9757 / MK).